The sequence spans 589 residues: Probable peptidoglycan D,D-transpeptidase FtsI (589 aa).

A helical transmembrane segment spans residues 47–67; sequence IFLVMGFFGFCFVGVSLGAGW. Residue S296 is the Acyl-ester intermediate of the active site.

Belongs to the transpeptidase family. As to quaternary structure, interacts with FtsN and FtsW.

The protein localises to the cell inner membrane. The catalysed reaction is Preferential cleavage: (Ac)2-L-Lys-D-Ala-|-D-Ala. Also transpeptidation of peptidyl-alanyl moieties that are N-acyl substituents of D-alanine.. It participates in cell wall biogenesis; peptidoglycan biosynthesis. Its function is as follows. Catalyzes cross-linking of the peptidoglycan cell wall at the division septum. The sequence is that of Probable peptidoglycan D,D-transpeptidase FtsI (ftsI) from Caulobacter vibrioides (strain NA1000 / CB15N) (Caulobacter crescentus).